The primary structure comprises 461 residues: MDHSPWQRCLSVLQEELPAQQFSMWIRPLQCVINDNVMTLYAPNRFVLDWVRDKYVNRINELLTINESNNPLLLRFDVGSKPTIDNSVTNSPVSRNTGGNESLFAKATSAPKVAEPESNIPKKTNVRLNYTFENFVEGKSNQLARAAASQVADNPGTAYNPLFIYGGTGLGKTHLLHAVGNGILLNKPNAKIAYMHSERFVQDMVRALQNNAMEKFKQYYRSVDALLIDDIQFFAGKERTQEEFFHTFNALLEGNQQVILTSDRYPKEINGVDDRLKSRFGWGLTLAIEPPELETRVAILKRKAQESQINLADEVAFFIAKRLRSNVRELEGALNRVIANANFTGRAITIDFVREALRDLLALQDKLVTIDNIQRTVAEYYKIKIADLLSKRRNRSVARPRQIAMALSKELTNHSLPEIGDAFGGRDHTTVLHACRKVKSLREETHDIKEDYSNLIRTLSS.

The segment at 1–83 (MDHSPWQRCL…LRFDVGSKPT (83 aa)) is domain I, interacts with DnaA modulators. Residues 83–124 (TIDNSVTNSPVSRNTGGNESLFAKATSAPKVAEPESNIPKKT) form a domain II region. The tract at residues 125–341 (NVRLNYTFEN…GALNRVIANA (217 aa)) is domain III, AAA+ region. The ATP site is built by Gly-169, Gly-171, Lys-172, and Thr-173. The tract at residues 342–461 (NFTGRAITID…YSNLIRTLSS (120 aa)) is domain IV, binds dsDNA.

The protein belongs to the DnaA family. As to quaternary structure, oligomerizes as a right-handed, spiral filament on DNA at oriC.

It localises to the cytoplasm. Functionally, plays an essential role in the initiation and regulation of chromosomal replication. ATP-DnaA binds to the origin of replication (oriC) to initiate formation of the DNA replication initiation complex once per cell cycle. Binds the DnaA box (a 9 base pair repeat at the origin) and separates the double-stranded (ds)DNA. Forms a right-handed helical filament on oriC DNA; dsDNA binds to the exterior of the filament while single-stranded (ss)DNA is stabiized in the filament's interior. The ATP-DnaA-oriC complex binds and stabilizes one strand of the AT-rich DNA unwinding element (DUE), permitting loading of DNA polymerase. After initiation quickly degrades to an ADP-DnaA complex that is not apt for DNA replication. Binds acidic phospholipids. This is Chromosomal replication initiator protein DnaA from Colwellia psychrerythraea (strain 34H / ATCC BAA-681) (Vibrio psychroerythus).